The sequence spans 311 residues: Syndecan-1 (311 aa).

The N-terminal stretch at 1 to 22 (MRRAALWLWLCALALRLQPALL) is a signal peptide. The Extracellular segment spans residues 23–255 (HSVAVNMPPE…GLLDRKEVLG (233 aa)). Disordered regions lie at residues 31-85 (PEDQ…PDAI) and 141-244 (TMAP…TGAS). Residues 32-42 (EDQDGSGDDSD) show a composition bias toward acidic residues. O-linked (Xyl...) (chondroitin sulfate) serine glycosylation is present at Ser-37. The N-linked (GlcNAc...) asparagine glycan is linked to Asn-43. Ser-45 and Ser-47 each carry an O-linked (Xyl...) (heparan sulfate) serine glycan. Over residues 71–84 (TTTATAPEPTSPDA) the composition is skewed to low complexity. 2 stretches are compositionally biased toward basic and acidic residues: residues 151-162 (PHRDVQPDHHET) and 169-180 (GRMEPHRPHVEE). 2 O-linked (Xyl...) (chondroitin sulfate) serine glycosylation sites follow: Ser-204 and Ser-214. Positions 215-226 (GENAAGAAGEPG) are enriched in low complexity. Residues 256-276 (GVIAGGLVGLIFAVCLVGFML) traverse the membrane as a helical segment. The Cytoplasmic portion of the chain corresponds to 277–311 (YRMKKKDEGSYSLEEPKQANGGAYQKPTKQEEFYA). The disordered stretch occupies residues 285 to 311 (GSYSLEEPKQANGGAYQKPTKQEEFYA). Ser-286 carries the post-translational modification Phosphoserine.

Belongs to the syndecan proteoglycan family. As to quaternary structure, interacts with CDCP1. Interacts (via C-terminus) with TIAM1 (via PDZ domain). Interacts with MDK. Post-translationally, shedding is enhanced by a number of factors such as heparanase, thrombin or EGF. Also by stress and wound healing. PMA-mediated shedding is inhibited by TIMP3.

It localises to the membrane. The protein localises to the secreted. It is found in the extracellular exosome. Functionally, cell surface proteoglycan that contains both heparan sulfate and chondroitin sulfate and that links the cytoskeleton to the interstitial matrix. Regulates exosome biogenesis in concert with SDCBP and PDCD6IP. Able to induce its own expression in dental mesenchymal cells and also in the neighboring dental epithelial cells via an MSX1-mediated pathway. The protein is Syndecan-1 of Bos taurus (Bovine).